The sequence spans 696 residues: Golgi integral membrane protein 4 (696 aa).

Residue Gly2 is the site of N-myristoyl glycine attachment. Residues 2 to 12 (GNGMCSRKQKR) lie on the Cytoplasmic side of the membrane. Residues 13–33 (IFQTLLLLTVVFGFLYGAMLY) form a helical; Signal-anchor for type II membrane protein membrane-spanning segment. Residues 34–696 (YELQTQLRKA…AEKSHRRAEM (663 aa)) lie on the Lumenal side of the membrane. Positions 35–244 (ELQTQLRKAE…KQLKDTLNRI (210 aa)) form a coiled coil. Residues 38–107 (TQLRKAEAVA…ETLNKGRQDS (70 aa)) are golgi targeting. The segment at 80–175 (LEHKKAKEDF…QELSKLKETV (96 aa)) is endosome targeting. 3 disordered regions span residues 122–145 (KSQHEELKKQHSDLEEEHRKQGED), 244–391 (IPSL…HARA), and 427–696 (LREH…RAEM). Basic and acidic residues predominate over residues 123–145 (SQHEELKKQHSDLEEEHRKQGED). A golgi targeting region spans residues 176–248 (YNLREENRQL…DTLNRIPSLR (73 aa)). Residues 254–269 (EQQNVTQVAHSPQGYN) are compositionally biased toward polar residues. N-linked (GlcNAc...) asparagine glycosylation occurs at Asn257. Composition is skewed to basic and acidic residues over residues 271 to 281 (AREKPTREVQE), 298 to 313 (RAEDTKLYAPTHKEAE), 324 to 343 (EVERREPEEHQVEEEHRKAL), 355 to 364 (EHLEEEHDPS), and 370 to 380 (REWKEQHEQRE). Residue Ser364 is modified to Phosphoserine. Over residues 436-453 (QQRLQGHLLRQQEQQQQQ) the composition is skewed to low complexity. Basic and acidic residues-rich tracts occupy residues 464-476 (AELEEGRPQHQEQ) and 505-545 (AYER…RAAV). Position 538 is a phosphoserine (Ser538). Over residues 604-626 (QQEDNVDEQYQEEAEEEVQEDLT) the composition is skewed to acidic residues. Residue Tyr613 is modified to Phosphotyrosine. Residue Thr626 is modified to Phosphothreonine. 2 stretches are compositionally biased toward basic and acidic residues: residues 627 to 638 (EEKKRELEHNAE) and 661 to 672 (RDDNRPKGREEH). The residue at position 673 (Tyr673) is a Phosphotyrosine. Residues 673-683 (YEEEEEEEEDG) are compositionally biased toward acidic residues.

Belongs to the GOLIM4 family. Phosphorylated probably by c-AMP-dependent kinases in its lumenal part. Post-translationally, O-glycosylated; modified by sialic acid residues. In terms of processing, N-glycosylated; N-glycans are probably of the complex type and modified by sialic acid residues.

It is found in the golgi apparatus. It localises to the golgi stack membrane. The protein resides in the endosome membrane. Its subcellular location is the membrane. Functionally, plays a role in endosome to Golgi protein trafficking; mediates protein transport along the late endosome-bypass pathway from the early endosome to the Golgi. The chain is Golgi integral membrane protein 4 (GOLIM4) from Homo sapiens (Human).